Consider the following 338-residue polypeptide: Aspartate-semialdehyde dehydrogenase (338 aa).

Residues 9–12 (TGQV) and 37–38 (RS) each bind NADP(+). Arginine 93 is a binding site for phosphate. The active-site Acyl-thioester intermediate is cysteine 123. Residue glutamine 150 participates in substrate binding. An NADP(+)-binding site is contributed by 153–154 (SG). Lysine 220 lines the phosphate pocket. Position 242 (arginine 242) interacts with substrate. Histidine 249 acts as the Proton acceptor in catalysis. Position 316 (asparagine 316) interacts with NADP(+).

The protein belongs to the aspartate-semialdehyde dehydrogenase family. As to quaternary structure, homodimer.

The catalysed reaction is L-aspartate 4-semialdehyde + phosphate + NADP(+) = 4-phospho-L-aspartate + NADPH + H(+). It functions in the pathway amino-acid biosynthesis; L-lysine biosynthesis via DAP pathway; (S)-tetrahydrodipicolinate from L-aspartate: step 2/4. Its pathway is amino-acid biosynthesis; L-methionine biosynthesis via de novo pathway; L-homoserine from L-aspartate: step 2/3. The protein operates within amino-acid biosynthesis; L-threonine biosynthesis; L-threonine from L-aspartate: step 2/5. Functionally, catalyzes the NADPH-dependent formation of L-aspartate-semialdehyde (L-ASA) by the reductive dephosphorylation of L-aspartyl-4-phosphate. This Streptomyces akiyoshiensis protein is Aspartate-semialdehyde dehydrogenase.